The primary structure comprises 427 residues: Glutamate-1-semialdehyde 2,1-aminomutase (427 aa).

The residue at position 265 (lysine 265) is an N6-(pyridoxal phosphate)lysine.

This sequence belongs to the class-III pyridoxal-phosphate-dependent aminotransferase family. HemL subfamily. Homodimer. Requires pyridoxal 5'-phosphate as cofactor.

It is found in the cytoplasm. The enzyme catalyses (S)-4-amino-5-oxopentanoate = 5-aminolevulinate. It participates in porphyrin-containing compound metabolism; protoporphyrin-IX biosynthesis; 5-aminolevulinate from L-glutamyl-tRNA(Glu): step 2/2. The polypeptide is Glutamate-1-semialdehyde 2,1-aminomutase (Nitratiruptor sp. (strain SB155-2)).